A 379-amino-acid polypeptide reads, in one-letter code: Heme chaperone HemW (379 aa).

The 232-residue stretch at 1–232 (MLQKPNSAYF…MDILAKNGYN (232 aa)) folds into the Radical SAM core domain. Tyr9 contacts S-adenosyl-L-methionine. Residues Cys15, Cys19, and Cys22 each contribute to the [4Fe-4S] cluster site. Residues Gly60, 61–62 (GT), Glu93, Gln120, Arg132, and Asp157 contribute to the S-adenosyl-L-methionine site.

This sequence belongs to the anaerobic coproporphyrinogen-III oxidase family. HemW subfamily. As to quaternary structure, homodimer.

The protein resides in the cytoplasm. It localises to the cell membrane. Its function is as follows. Could serve in the delivery of heme to a membrane-localized target protein. Binds one molecule of heme per monomer, possibly covalently; heme and Fe-S cluster binding are independent. Incubation with the reductant sodium dithionite increases binding. Does not have coproporphyrinogen III dehydrogenase activity in vitro, does not complement an E.coli hemN deletion in vivo. Binds 1 Fe-S cluster, it is probably [4Fe-4S]. The cluster is coordinated with 3 cysteines and an exchangeable S-adenosyl-L-methionine; only dimeric protein has the cluster. The sequence is that of Heme chaperone HemW from Lactococcus lactis subsp. lactis (strain IL1403) (Streptococcus lactis).